A 312-amino-acid polypeptide reads, in one-letter code: Ribonuclease Z (312 aa).

The Zn(2+) site is built by histidine 63, histidine 65, aspartate 67, histidine 68, histidine 141, aspartate 212, and histidine 270. Catalysis depends on aspartate 67, which acts as the Proton acceptor.

This sequence belongs to the RNase Z family. Homodimer. Requires Zn(2+) as cofactor.

It catalyses the reaction Endonucleolytic cleavage of RNA, removing extra 3' nucleotides from tRNA precursor, generating 3' termini of tRNAs. A 3'-hydroxy group is left at the tRNA terminus and a 5'-phosphoryl group is left at the trailer molecule.. In terms of biological role, zinc phosphodiesterase, which displays some tRNA 3'-processing endonuclease activity. Probably involved in tRNA maturation, by removing a 3'-trailer from precursor tRNA. This chain is Ribonuclease Z, found in Lactobacillus helveticus (strain DPC 4571).